Reading from the N-terminus, the 273-residue chain is Phosphatidylglycerol--prolipoprotein diacylglyceryl transferase (273 aa).

4 helical membrane-spanning segments follow: residues 18-38, 47-67, 89-109, and 116-136; these read IPVR…YVVG, LPED…IICA, IWNG…TAYI, and VSFL…QIIG. Arg137 is an a 1,2-diacyl-sn-glycero-3-phospho-(1'-sn-glycerol) binding site. The next 3 helical transmembrane spans lie at 178-198, 207-227, and 238-258; these read VHPT…ILLI, GEIF…IEGM, and LRSA…AIIY.

This sequence belongs to the Lgt family.

The protein resides in the cell membrane. The enzyme catalyses L-cysteinyl-[prolipoprotein] + a 1,2-diacyl-sn-glycero-3-phospho-(1'-sn-glycerol) = an S-1,2-diacyl-sn-glyceryl-L-cysteinyl-[prolipoprotein] + sn-glycerol 1-phosphate + H(+). It participates in protein modification; lipoprotein biosynthesis (diacylglyceryl transfer). Catalyzes the transfer of the diacylglyceryl group from phosphatidylglycerol to the sulfhydryl group of the N-terminal cysteine of a prolipoprotein, the first step in the formation of mature lipoproteins. The chain is Phosphatidylglycerol--prolipoprotein diacylglyceryl transferase from Lysinibacillus sphaericus (strain C3-41).